Here is a 306-residue protein sequence, read N- to C-terminus: D-alanine--D-alanine ligase (306 aa).

Active-site residues include Glu-15 and Ser-150. The 203-residue stretch at 101–303 folds into the ATP-grasp domain; sequence KLLWKSLSLR…FDELILKILK (203 aa). Residue 134–189 coordinates ATP; the sequence is ILKLKFPVVIKPNNAGSSIGITIVNHPDLLIDSINLAFNYSNNIIIEKFLKGTEYT. Residues Asp-257, Glu-270, and Asn-272 each contribute to the Mg(2+) site. Ser-281 is a catalytic residue.

The protein belongs to the D-alanine--D-alanine ligase family. The cofactor is Mg(2+). It depends on Mn(2+) as a cofactor.

The protein localises to the cytoplasm. The catalysed reaction is 2 D-alanine + ATP = D-alanyl-D-alanine + ADP + phosphate + H(+). It participates in cell wall biogenesis; peptidoglycan biosynthesis. Its function is as follows. Cell wall formation. This Buchnera aphidicola subsp. Schizaphis graminum (strain Sg) protein is D-alanine--D-alanine ligase.